The chain runs to 431 residues: Tol-Pal system protein TolB (431 aa).

A signal peptide spans 1–26; that stretch reads MSLMTKLGFRALVASCLIAAGSAANA. A disordered region spans residues 411-431; the sequence is PQILSVQGGSVREPSWGPFMQ.

The protein belongs to the TolB family. As to quaternary structure, the Tol-Pal system is composed of five core proteins: the inner membrane proteins TolA, TolQ and TolR, the periplasmic protein TolB and the outer membrane protein Pal. They form a network linking the inner and outer membranes and the peptidoglycan layer.

The protein localises to the periplasm. Functionally, part of the Tol-Pal system, which plays a role in outer membrane invagination during cell division and is important for maintaining outer membrane integrity. This Burkholderia multivorans (strain ATCC 17616 / 249) protein is Tol-Pal system protein TolB.